Reading from the N-terminus, the 249-residue chain is Protein TIFY 10B (249 aa).

The region spanning 113-148 (PESQSAPLTIFYGGRVMVFDDFSAEKAKEVIDLANK) is the Tify domain. The short motif at 204–229 (PIARRASLHRFLEKRKDRITSKAPYQ) is the Jas element. A Nuclear localization signal motif is present at residues 206-213 (ARRASLHR). Residues 225 to 249 (KAPYQIDGSAEASSKPTNPAWLSSR) form a disordered region. Residues 235–249 (EASSKPTNPAWLSSR) are compositionally biased toward polar residues.

Belongs to the TIFY/JAZ family. In terms of assembly, homo- and heterodimer. Interacts with COI1, MYC2, MYC3, MYC4, AFPH2/NINJA, TIFY10A/JAZ1, TIFY6B/JAZ3, TIFY11A/JAZ5, TIFY11B/JAZ6, TIFY5A/JAZ8, TIFY7/JAZ9, TIFY9/JAZ10, TIFY3A/JAZ11 and TIFY3B/JAZ12. Interacts with RHD6 and RSL1. (Microbial infection) Interacts with the pathogenic Pseudomonas syringae HopZ1a protein. Post-translationally, (Microbial infection) Acetylated by Pseudomonas syringae HopZ1a. In terms of processing, ubiquitinated. Targeted for degradation by the SCF(COI1) E3 ubiquitin ligase-proteasome pathway during jasmonate signaling. In terms of tissue distribution, expressed in cotyledons, hypocotyls, roots, sepals, petal vascular tissue and stigmas of developing flowers. Expressed in stamen filaments after jasmonic acid treatment.

Its subcellular location is the nucleus. Repressor of jasmonate responses. Jasmonoyl-isoleucine (JA-Ile) specifically promotes COI1-TIFY10B/JAZ2 interaction. Activated by MYC2, MYC3 and MYC4 transcription factors. Interacts with and suppresses RHD6 and RSL1 transcription factor activities to negatively regulate jasmonate-stimulated root hair development. The polypeptide is Protein TIFY 10B (Arabidopsis thaliana (Mouse-ear cress)).